The sequence spans 190 residues: Endo-1,4-beta-xylanase (190 aa).

The 190-residue stretch at 1–190 (QTIGPGTGYS…SSGSASITVS (190 aa)) folds into the GH11 domain. Glu-86 (nucleophile) is an active-site residue. Glu-177 acts as the Proton donor in catalysis.

It belongs to the glycosyl hydrolase 11 (cellulase G) family.

It catalyses the reaction Endohydrolysis of (1-&gt;4)-beta-D-xylosidic linkages in xylans.. Its pathway is glycan degradation; xylan degradation. This chain is Endo-1,4-beta-xylanase, found in Trichoderma harzianum (Hypocrea lixii).